The chain runs to 618 residues: Proline--tRNA ligase (618 aa).

Belongs to the class-II aminoacyl-tRNA synthetase family. ProS type 1 subfamily. In terms of assembly, homodimer.

It is found in the cytoplasm. It carries out the reaction tRNA(Pro) + L-proline + ATP = L-prolyl-tRNA(Pro) + AMP + diphosphate. Catalyzes the attachment of proline to tRNA(Pro) in a two-step reaction: proline is first activated by ATP to form Pro-AMP and then transferred to the acceptor end of tRNA(Pro). As ProRS can inadvertently accommodate and process non-cognate amino acids such as alanine and cysteine, to avoid such errors it has two additional distinct editing activities against alanine. One activity is designated as 'pretransfer' editing and involves the tRNA(Pro)-independent hydrolysis of activated Ala-AMP. The other activity is designated 'posttransfer' editing and involves deacylation of mischarged Ala-tRNA(Pro). The misacylated Cys-tRNA(Pro) is not edited by ProRS. The chain is Proline--tRNA ligase from Streptococcus pyogenes serotype M18 (strain MGAS8232).